A 331-amino-acid chain; its full sequence is Probable allantoicase (331 aa).

This sequence belongs to the allantoicase family.

It carries out the reaction allantoate + H2O = (S)-ureidoglycolate + urea. It participates in nitrogen metabolism; (S)-allantoin degradation; (S)-ureidoglycolate from allantoate (aminidohydrolase route): step 1/1. This is Probable allantoicase from Pseudomonas savastanoi pv. phaseolicola (strain 1448A / Race 6) (Pseudomonas syringae pv. phaseolicola (strain 1448A / Race 6)).